The following is a 427-amino-acid chain: UPF0229 protein YeaH (427 aa).

Residues Asn-79–Arg-90 are compositionally biased toward basic and acidic residues. A disordered region spans residues Asn-79 to Glu-110. The segment covering Gln-92–Gln-102 has biased composition (gly residues).

It belongs to the UPF0229 family.

In Shigella boydii serotype 18 (strain CDC 3083-94 / BS512), this protein is UPF0229 protein YeaH.